The following is an 81-amino-acid chain: Putative truncated GMC-type inactive oxidoreductase R833 (81 aa).

It belongs to the GMC oxidoreductase family.

This chain is Putative truncated GMC-type inactive oxidoreductase R833, found in Acanthamoeba polyphaga mimivirus (APMV).